A 323-amino-acid chain; its full sequence is Dof zinc finger protein DOF3.6 (323 aa).

The segment at 76-130 adopts a Dof-type zinc-finger fold; that stretch reads LNCPRCDSTNTKFCYFNNYSLTQPRHFCKTCRRYWTRGGSLRNVPVGGGFRRNKR. 4 residues coordinate Zn(2+): Cys78, Cys81, Cys103, and Cys106. 2 disordered regions span residues 121 to 160 and 304 to 323; these read VGGG…SYSN and GGNS…HLSF. A compositionally biased stretch (basic residues) spans 126 to 135; the sequence is RRNKRSKSRS. Residues 136–159 are compositionally biased toward low complexity; sequence KSTVVVSTDNTTSTSSLTSRPSYS.

Interacts with OBF4. As to expression, predominantly expressed in roots.

The protein resides in the nucleus. Transcription factor that binds specifically to a 5'-AA[AG]G-3' consensus core sequence. Enhances the DNA binding of OBF transcription factors to OCS elements. This is Dof zinc finger protein DOF3.6 (DOF3.6) from Arabidopsis thaliana (Mouse-ear cress).